We begin with the raw amino-acid sequence, 462 residues long: Nitrate/nitrite transporter NarU (462 aa).

Residues 1–35 are Cytoplasmic-facing; sequence MTRQNENYNRYLLSDWRPENPAFWENKGKGIARRN. The chain crosses the membrane as a helical span at residues 36–56; the sequence is LWISVSCLLLAFCVWMLFSAV. Residues 57 to 71 lie on the Periplasmic side of the membrane; that stretch reads AVNLNKIGFNFTTDQ. The helical transmembrane segment at 72–92 threads the bilayer; that stretch reads LFLLTALPSLSGAILRVPYSF. Residues 93 to 101 are Cytoplasmic-facing; the sequence is MVPLFGGRK. Residues 102–122 traverse the membrane as a helical segment; it reads WTVLSTVILIIPCAWLGFAVQ. At 123–124 the chain is on the periplasmic side; it reads NP. A helical membrane pass occupies residues 125-145; sequence ATPFGVFMLIALLCGFAGANF. Topologically, residues 146-180 are cytoplasmic; that stretch reads ASSMGNISFFFPKARQGSALGINGGLGNLGVSVMQ. Residues 181–201 form a helical membrane-spanning segment; the sequence is LIAPLVIFLPIFTFLGVQGVP. The Periplasmic portion of the chain corresponds to 202-206; the sequence is QPDGS. The chain crosses the membrane as a helical span at residues 207–227; the sequence is LLALTNAAWIWVPLLAVATLA. Residues 228 to 258 are Cytoplasmic-facing; that stretch reads AWFGMNDIGSSKASVASQLPVLKRLHLWLLS. The chain crosses the membrane as a helical span at residues 259–279; that stretch reads LLYLATFGSFIGFSAGFAMLA. The Periplasmic segment spans residues 280–287; sequence KTQFPDVN. The chain crosses the membrane as a helical span at residues 288 to 308; that stretch reads ILQLAFFGPFIGALARSAGGV. At 309 to 317 the chain is on the cytoplasmic side; it reads ISDKFGGVR. The chain crosses the membrane as a helical span at residues 318–338; the sequence is VTLINFIFMALFTALLFLTLP. At 339–341 the chain is on the periplasmic side; that stretch reads GSG. A helical membrane pass occupies residues 342–362; the sequence is AGSFSAFYLVFMGLFLTAGLG. At 363 to 401 the chain is on the cytoplasmic side; sequence SGSTFQMIAVIFRQITLYNVKLRGGSDEQAQREAVTDTA. A helical membrane pass occupies residues 402 to 422; that stretch reads AALGFISAIGAVGGFFIPKAF. Topologically, residues 423-432 are periplasmic; the sequence is GTSLALTGSP. Residues 433 to 453 form a helical membrane-spanning segment; it reads VGAMKIFLLFYLACVLLTWLV. Residues 454-462 lie on the Cytoplasmic side of the membrane; it reads YGRRKPKQQ.

Belongs to the major facilitator superfamily. Nitrate/nitrite porter (TC 2.A.1.8) family.

The protein resides in the cell inner membrane. Functionally, catalyzes nitrate uptake, nitrite uptake and nitrite export across the cytoplasmic membrane. The sequence is that of Nitrate/nitrite transporter NarU (narU) from Salmonella typhimurium (strain LT2 / SGSC1412 / ATCC 700720).